Reading from the N-terminus, the 145-residue chain is UPF0201 protein M164_1168 (145 aa).

It belongs to the UPF0201 family.

The chain is UPF0201 protein M164_1168 from Saccharolobus islandicus (strain M.16.4 / Kamchatka #3) (Sulfolobus islandicus).